The following is a 127-amino-acid chain: Holo-[acyl-carrier-protein] synthase (127 aa).

Mg(2+)-binding residues include Asp9 and Glu58.

Belongs to the P-Pant transferase superfamily. AcpS family. Mg(2+) serves as cofactor.

It is found in the cytoplasm. The catalysed reaction is apo-[ACP] + CoA = holo-[ACP] + adenosine 3',5'-bisphosphate + H(+). Its function is as follows. Transfers the 4'-phosphopantetheine moiety from coenzyme A to a Ser of acyl-carrier-protein. The chain is Holo-[acyl-carrier-protein] synthase from Shewanella sp. (strain MR-4).